Here is a 156-residue protein sequence, read N- to C-terminus: Cyanate hydratase (156 aa).

Active-site residues include Arg-96, Glu-99, and Ser-122.

It belongs to the cyanase family.

It carries out the reaction cyanate + hydrogencarbonate + 3 H(+) = NH4(+) + 2 CO2. In terms of biological role, catalyzes the reaction of cyanate with bicarbonate to produce ammonia and carbon dioxide. In Serratia proteamaculans (strain 568), this protein is Cyanate hydratase.